The chain runs to 375 residues: Peritrophin-48 (375 aa).

Residues 1 to 20 (MIIKTLLASVAIMLIATVNA) form the signal peptide. Chitin-binding type-2 domains lie at 25 to 83 (AKYC…NCIL), 86 to 143 (DNPC…SDDD), 153 to 210 (LNIC…MCER), 224 to 292 (ETLC…GCNR), and 294 to 360 (EYTT…ACQN). A disulfide bridge connects residues C60 and C73. Residue N117 is glycosylated (N-linked (GlcNAc...) asparagine). 4 disulfide bridges follow: C120-C133, C187-C200, C265-C278, and C330-C343. A glycan (N-linked (GlcNAc...) asparagine) is linked at N360.

In terms of processing, glycosylated. As to expression, cardia and midgut peritrophic membrane.

In terms of biological role, may bind chitin or related oligosaccharide structures. The sequence is that of Peritrophin-48 from Lucilia cuprina (Green bottle fly).